The chain runs to 404 residues: S-adenosylmethionine synthase (404 aa).

Residue His16 coordinates ATP. Asp18 is a binding site for Mg(2+). Residue Glu44 participates in K(+) binding. Residues Glu57 and Gln100 each contribute to the L-methionine site. The tract at residues 100–110 (QSPEINQGVAR) is flexible loop. ATP contacts are provided by residues 177–179 (DGK), Asp257, 263–264 (RK), Ala280, and Lys284. L-methionine is bound at residue Asp257. Lys288 contributes to the L-methionine binding site.

It belongs to the AdoMet synthase family. In terms of assembly, homotetramer; dimer of dimers. Mg(2+) is required as a cofactor. K(+) serves as cofactor.

It is found in the cytoplasm. The catalysed reaction is L-methionine + ATP + H2O = S-adenosyl-L-methionine + phosphate + diphosphate. It participates in amino-acid biosynthesis; S-adenosyl-L-methionine biosynthesis; S-adenosyl-L-methionine from L-methionine: step 1/1. Functionally, catalyzes the formation of S-adenosylmethionine (AdoMet) from methionine and ATP. The overall synthetic reaction is composed of two sequential steps, AdoMet formation and the subsequent tripolyphosphate hydrolysis which occurs prior to release of AdoMet from the enzyme. The protein is S-adenosylmethionine synthase of Bifidobacterium adolescentis (strain ATCC 15703 / DSM 20083 / NCTC 11814 / E194a).